The following is a 501-amino-acid chain: Beta-glucosidase 25 (501 aa).

An N-terminal signal peptide occupies residues Met-1–Ala-19. An a beta-D-glucoside-binding site is contributed by Gln-39. N-linked (GlcNAc...) asparagine glycosylation occurs at Asn-107. A beta-D-glucoside-binding positions include His-140 and Asn-185–Glu-186. The active-site Proton donor is Glu-186. A disulfide bond links Cys-205 and Cys-213. Residues Tyr-329, Glu-402, Trp-452, Glu-459–Trp-460, and Phe-468 contribute to the a beta-D-glucoside site. Catalysis depends on Glu-402, which acts as the Nucleophile. N-linked (GlcNAc...) asparagine glycosylation occurs at Asn-478.

Belongs to the glycosyl hydrolase 1 family.

The enzyme catalyses Hydrolysis of terminal, non-reducing beta-D-glucosyl residues with release of beta-D-glucose.. The chain is Beta-glucosidase 25 (BGLU25) from Oryza sativa subsp. japonica (Rice).